We begin with the raw amino-acid sequence, 179 residues long: Ribulose bisphosphate carboxylase small subunit, chloroplastic 2 (179 aa).

A chloroplast-targeting transit peptide spans 1–58 (MASSATMLSSVATAACVAPAQASMVAPFVGLKSASAFPVTQKTVTGLSTLPSNGGRVQ).

This sequence belongs to the RuBisCO small chain family. In terms of assembly, heterohexadecamer of 8 large and 8 small subunits.

Its subcellular location is the plastid. The protein resides in the chloroplast. In terms of biological role, ruBisCO catalyzes two reactions: the carboxylation of D-ribulose 1,5-bisphosphate, the primary event in carbon dioxide fixation, as well as the oxidative fragmentation of the pentose substrate. Both reactions occur simultaneously and in competition at the same active site. Although the small subunit is not catalytic it is essential for maximal activity. The protein is Ribulose bisphosphate carboxylase small subunit, chloroplastic 2 of Fritillaria agrestis (Stinkbells).